The sequence spans 256 residues: 5-keto-4-deoxy-D-glucarate aldolase (256 aa).

Histidine 50 serves as the catalytic Proton acceptor. Substrate is bound at residue glutamine 151. Position 153 (glutamate 153) interacts with Mg(2+). Substrate is bound by residues serine 178 and aspartate 179. Aspartate 179 is a Mg(2+) binding site.

The protein belongs to the HpcH/HpaI aldolase family. KDGluc aldolase subfamily. As to quaternary structure, homohexamer; trimer of dimers. The cofactor is Mg(2+).

The catalysed reaction is 5-dehydro-4-deoxy-D-glucarate = 2-hydroxy-3-oxopropanoate + pyruvate. It catalyses the reaction 2-dehydro-3-deoxy-D-glucarate = 2-hydroxy-3-oxopropanoate + pyruvate. The protein operates within carbohydrate acid metabolism; galactarate degradation; D-glycerate from galactarate: step 2/3. In terms of biological role, catalyzes the reversible retro-aldol cleavage of both 5-keto-4-deoxy-D-glucarate and 2-keto-3-deoxy-D-glucarate to pyruvate and tartronic semialdehyde. This Shigella boydii serotype 4 (strain Sb227) protein is 5-keto-4-deoxy-D-glucarate aldolase.